The chain runs to 364 residues: Transcription factor IIIA (364 aa).

9 consecutive C2H2-type zinc fingers follow at residues 38–62 (FICS…LCKH), 68–92 (FVCD…VLIH), 98–123 (FVCA…ERKH), 130–154 (YVCS…QCQH), 160–184 (FRCT…GKVH), 187–211 (YLCQ…REAH), 215–237 (ITCN…MKTH), 244–269 (YRCP…LSFH), and 275–299 (FVCE…SVVH). The interval 299–364 (HDPDKKRMKL…PPPAALLTVC (66 aa)) is disordered. Over residues 338-352 (SLPNASAESSSSPEA) the composition is skewed to low complexity.

It localises to the nucleus. In terms of biological role, involved in ribosomal large subunit biogenesis. Binds the approximately 50 base pairs internal control region (ICR) of 5S ribosomal RNA genes. It is required for their RNA polymerase III-dependent transcription and may also maintain the transcription of other genes. Also binds the transcribed 5S RNA's. This chain is Transcription factor IIIA (Gtf3a), found in Mus musculus (Mouse).